We begin with the raw amino-acid sequence, 603 residues long: Translation initiation factor IF-2 (603 aa).

The region spanning 112–279 is the tr-type G domain; it reads TRPPIITIMG…NINLQAEILD (168 aa). Residues 121 to 128 form a G1 region; that stretch reads GHVDHGKT. 121-128 provides a ligand contact to GTP; it reads GHVDHGKT. Residues 146 to 150 are G2; it reads GITQH. The segment at 167 to 170 is G3; it reads DTPG. Residues 167–171 and 221–224 each bind GTP; these read DTPGH and NKMD. Residues 221 to 224 form a G4 region; that stretch reads NKMD. The G5 stretch occupies residues 257-259; the sequence is SAL.

It belongs to the TRAFAC class translation factor GTPase superfamily. Classic translation factor GTPase family. IF-2 subfamily.

It localises to the cytoplasm. Its function is as follows. One of the essential components for the initiation of protein synthesis. Protects formylmethionyl-tRNA from spontaneous hydrolysis and promotes its binding to the 30S ribosomal subunits. Also involved in the hydrolysis of GTP during the formation of the 70S ribosomal complex. The protein is Translation initiation factor IF-2 of Mycoplasmopsis pulmonis (strain UAB CTIP) (Mycoplasma pulmonis).